The following is a 325-amino-acid chain: ATP phosphoribosyltransferase (325 aa).

This sequence belongs to the ATP phosphoribosyltransferase family. Long subfamily. It depends on Mg(2+) as a cofactor.

The protein resides in the cytoplasm. It carries out the reaction 1-(5-phospho-beta-D-ribosyl)-ATP + diphosphate = 5-phospho-alpha-D-ribose 1-diphosphate + ATP. The protein operates within amino-acid biosynthesis; L-histidine biosynthesis; L-histidine from 5-phospho-alpha-D-ribose 1-diphosphate: step 1/9. Its activity is regulated as follows. Feedback inhibited by histidine. Functionally, catalyzes the condensation of ATP and 5-phosphoribose 1-diphosphate to form N'-(5'-phosphoribosyl)-ATP (PR-ATP). Has a crucial role in the pathway because the rate of histidine biosynthesis seems to be controlled primarily by regulation of HisG enzymatic activity. The polypeptide is ATP phosphoribosyltransferase (Nitrobacter winogradskyi (strain ATCC 25391 / DSM 10237 / CIP 104748 / NCIMB 11846 / Nb-255)).